The following is a 228-amino-acid chain: uncharacterized protein (228 aa).

The N-terminal stretch at 1-23 (MIRHTRLLLASLCLIATGARASA) is a signal peptide.

This is an uncharacterized protein from Methylorubrum extorquens (strain ATCC 14718 / DSM 1338 / JCM 2805 / NCIMB 9133 / AM1) (Methylobacterium extorquens).